Consider the following 378-residue polypeptide: uncharacterized protein (378 aa).

A run of 11 helical transmembrane segments spans residues 12–34 (SLAF…STFF), 44–66 (VKIY…IFLG), 92–112 (SIAL…LMLI), 132–154 (GFAS…IFLA), 161–180 (EVYA…SIIT), 200–222 (TFLL…IAMM), 235–257 (VEIY…FWGV), 267–285 (VFPL…LFFA), 290–312 (LIFV…RVYI), 327–349 (FLSL…FLFI), and 356–373 (LSAL…FIYL).

The protein localises to the cell membrane. This is an uncharacterized protein from Aquifex aeolicus (strain VF5).